The chain runs to 63 residues: MVIIKLNANKNMPVLAVEKPQEIHKEELSDHHQSNGFTSLDLEMIELENFVLHCPLPEENLAG.

In terms of assembly, forms heterodimers with virE2 that prevent virE2 anarchic homopolymerization and binding to DNA.

Involved in DNA transformation; controls virE2 polymerization and prevents virE2 binding to DNA. In Agrobacterium fabrum (strain C58 / ATCC 33970) (Agrobacterium tumefaciens (strain C58)), this protein is Protein virE1 (virE1).